Reading from the N-terminus, the 305-residue chain is Aspartate carbamoyltransferase catalytic subunit (305 aa).

Carbamoyl phosphate-binding residues include Arg52 and Thr53. L-aspartate is bound at residue Lys80. Residues Arg102, His132, and Gln135 each contribute to the carbamoyl phosphate site. L-aspartate-binding residues include Arg165 and Arg217. Ala258 and Pro259 together coordinate carbamoyl phosphate.

The protein belongs to the aspartate/ornithine carbamoyltransferase superfamily. ATCase family. In terms of assembly, heterododecamer (2C3:3R2) of six catalytic PyrB chains organized as two trimers (C3), and six regulatory PyrI chains organized as three dimers (R2).

It carries out the reaction carbamoyl phosphate + L-aspartate = N-carbamoyl-L-aspartate + phosphate + H(+). The protein operates within pyrimidine metabolism; UMP biosynthesis via de novo pathway; (S)-dihydroorotate from bicarbonate: step 2/3. Its function is as follows. Catalyzes the condensation of carbamoyl phosphate and aspartate to form carbamoyl aspartate and inorganic phosphate, the committed step in the de novo pyrimidine nucleotide biosynthesis pathway. This is Aspartate carbamoyltransferase catalytic subunit from Latilactobacillus sakei subsp. sakei (strain 23K) (Lactobacillus sakei subsp. sakei).